We begin with the raw amino-acid sequence, 311 residues long: p-hydroxybenzoic acid efflux pump subunit AaeA (311 aa).

Residues 11 to 31 form a helical membrane-spanning segment; it reads VGITVLVVVLAVIAIFNVWAF.

Belongs to the membrane fusion protein (MFP) (TC 8.A.1) family.

It is found in the cell inner membrane. In terms of biological role, forms an efflux pump with AaeB. This Yersinia pseudotuberculosis serotype O:1b (strain IP 31758) protein is p-hydroxybenzoic acid efflux pump subunit AaeA.